The primary structure comprises 209 residues: MPVAVMADNAFSFRKLLDQCENQELEAPGGIATPPVYGQLLALYLLQNDMNNARYLWKRIPPAIKSANSELGGIWSVGQRIWQRDFPGIYTTINAHQWSETVQPIMEALRDATRRRAFALVSQAYTSIIADDFAAFVGLPVEEAVKGVLEQGWQADSTTRMVLPRKPASGTLDVSLNRFIPLSEPAPVPPIPNEQQLARLTDYVAFLEN.

The PCI domain maps to 8-179 (DNAFSFRKLL…GTLDVSLNRF (172 aa)). At Ser-175 the chain carries Phosphoserine.

This sequence belongs to the CSN8 family. In terms of assembly, component of the CSN complex, composed of COPS1/GPS1, COPS2, COPS3, COPS4, COPS5, COPS6, COPS7 (COPS7A or COPS7B), COPS8 and COPS9. In the complex, it probably interacts directly with COPS3, COPS4 and COPS7 (COPS7A or COPS7B). In terms of tissue distribution, widely expressed.

It is found in the cytoplasm. The protein resides in the nucleus. Its function is as follows. Component of the COP9 signalosome complex (CSN), a complex involved in various cellular and developmental processes. The CSN complex is an essential regulator of the ubiquitin (Ubl) conjugation pathway by mediating the deneddylation of the cullin subunits of SCF-type E3 ligase complexes, leading to decrease the Ubl ligase activity of SCF-type complexes such as SCF, CSA or DDB2. The complex is also involved in phosphorylation of p53/TP53, c-jun/JUN, IkappaBalpha/NFKBIA, ITPK1 and IRF8/ICSBP, possibly via its association with CK2 and PKD kinases. CSN-dependent phosphorylation of TP53 and JUN promotes and protects degradation by the Ubl system, respectively. The chain is COP9 signalosome complex subunit 8 (Cops8) from Mus musculus (Mouse).